Here is a 343-residue protein sequence, read N- to C-terminus: UPF0284 protein Msed_0735 (343 aa).

It belongs to the UPF0284 family.

The protein is UPF0284 protein Msed_0735 of Metallosphaera sedula (strain ATCC 51363 / DSM 5348 / JCM 9185 / NBRC 15509 / TH2).